Consider the following 506-residue polypeptide: Deoxyguanosinetriphosphate triphosphohydrolase (506 aa).

In terms of domain architecture, HD spans 66 to 274 (RLTHSLEVQQ…MEAADDISYC (209 aa)).

The protein belongs to the dGTPase family. Type 1 subfamily. As to quaternary structure, homotetramer. It depends on Mg(2+) as a cofactor.

The catalysed reaction is dGTP + H2O = 2'-deoxyguanosine + triphosphate + H(+). In terms of biological role, dGTPase preferentially hydrolyzes dGTP over the other canonical NTPs. This Yersinia pestis bv. Antiqua (strain Antiqua) protein is Deoxyguanosinetriphosphate triphosphohydrolase.